Reading from the N-terminus, the 2131-residue chain is Protein Ycf2 (2131 aa).

ATP is bound at residue 1484–1491 (GSIGTGRS).

It belongs to the Ycf2 family.

The protein localises to the plastid. Its subcellular location is the chloroplast stroma. In terms of biological role, probable ATPase of unknown function. Its presence in a non-photosynthetic plant (Epifagus virginiana) and experiments in tobacco indicate that it has an essential function which is probably not related to photosynthesis. This chain is Protein Ycf2 (ycf2-A), found in Spinacia oleracea (Spinach).